A 284-amino-acid polypeptide reads, in one-letter code: Tropomyosin (284 aa).

The stretch at Met1–Tyr284 forms a coiled coil. The span at Leu113–Asn142 shows a compositional bias: basic and acidic residues. The disordered stretch occupies residues Leu113 to Thr143.

Belongs to the tropomyosin family.

In terms of biological role, tropomyosin, in association with the troponin complex, plays a central role in the calcium dependent regulation of muscle contraction. The polypeptide is Tropomyosin (Acanthocheilonema viteae (Filarial nematode worm)).